The following is a 140-amino-acid chain: Putative pre-16S rRNA nuclease (140 aa).

It belongs to the YqgF nuclease family.

The protein resides in the cytoplasm. Functionally, could be a nuclease involved in processing of the 5'-end of pre-16S rRNA. This chain is Putative pre-16S rRNA nuclease, found in Halothermothrix orenii (strain H 168 / OCM 544 / DSM 9562).